A 284-amino-acid polypeptide reads, in one-letter code: Bifunctional protein FolD 2 (284 aa).

NADP(+) is bound by residues 164–166 (GRG), serine 189, and isoleucine 230.

The protein belongs to the tetrahydrofolate dehydrogenase/cyclohydrolase family. In terms of assembly, homodimer.

It catalyses the reaction (6R)-5,10-methylene-5,6,7,8-tetrahydrofolate + NADP(+) = (6R)-5,10-methenyltetrahydrofolate + NADPH. It carries out the reaction (6R)-5,10-methenyltetrahydrofolate + H2O = (6R)-10-formyltetrahydrofolate + H(+). It functions in the pathway one-carbon metabolism; tetrahydrofolate interconversion. Catalyzes the oxidation of 5,10-methylenetetrahydrofolate to 5,10-methenyltetrahydrofolate and then the hydrolysis of 5,10-methenyltetrahydrofolate to 10-formyltetrahydrofolate. In Desulfitobacterium hafniense (strain Y51), this protein is Bifunctional protein FolD 2.